A 315-amino-acid polypeptide reads, in one-letter code: Methionyl-tRNA formyltransferase (315 aa).

Residue 113-116 (SLLP) participates in (6S)-5,6,7,8-tetrahydrofolate binding.

Belongs to the Fmt family.

It catalyses the reaction L-methionyl-tRNA(fMet) + (6R)-10-formyltetrahydrofolate = N-formyl-L-methionyl-tRNA(fMet) + (6S)-5,6,7,8-tetrahydrofolate + H(+). Functionally, attaches a formyl group to the free amino group of methionyl-tRNA(fMet). The formyl group appears to play a dual role in the initiator identity of N-formylmethionyl-tRNA by promoting its recognition by IF2 and preventing the misappropriation of this tRNA by the elongation apparatus. The chain is Methionyl-tRNA formyltransferase from Escherichia fergusonii (strain ATCC 35469 / DSM 13698 / CCUG 18766 / IAM 14443 / JCM 21226 / LMG 7866 / NBRC 102419 / NCTC 12128 / CDC 0568-73).